We begin with the raw amino-acid sequence, 184 residues long: Ribosome maturation factor RimM (184 aa).

The region spanning 101 to 180 (DGEFFYCDLV…KITTNNAKTL (80 aa)) is the PRC barrel domain.

The protein belongs to the RimM family. In terms of assembly, binds ribosomal protein uS19.

Its subcellular location is the cytoplasm. In terms of biological role, an accessory protein needed during the final step in the assembly of 30S ribosomal subunit, possibly for assembly of the head region. Essential for efficient processing of 16S rRNA. May be needed both before and after RbfA during the maturation of 16S rRNA. It has affinity for free ribosomal 30S subunits but not for 70S ribosomes. This chain is Ribosome maturation factor RimM, found in Helicobacter pylori (strain Shi470).